Reading from the N-terminus, the 163-residue chain is Phosphopantetheine adenylyltransferase (163 aa).

Ser8 is a binding site for substrate. Residues 8-9 (SF) and His16 each bind ATP. Substrate is bound by residues Lys40, Thr72, and Arg86. ATP-binding positions include 87-89 (GLR), Glu97, and 122-128 (HSFLSSS).

Belongs to the bacterial CoaD family. Homohexamer. Mg(2+) is required as a cofactor.

It is found in the cytoplasm. It catalyses the reaction (R)-4'-phosphopantetheine + ATP + H(+) = 3'-dephospho-CoA + diphosphate. The protein operates within cofactor biosynthesis; coenzyme A biosynthesis; CoA from (R)-pantothenate: step 4/5. Reversibly transfers an adenylyl group from ATP to 4'-phosphopantetheine, yielding dephospho-CoA (dPCoA) and pyrophosphate. This is Phosphopantetheine adenylyltransferase from Parasynechococcus marenigrum (strain WH8102).